A 200-amino-acid polypeptide reads, in one-letter code: MSVETIINRIREEAEAEIRTIRAEEACDVGAIRAQAEQKAENAYNHRIAEGQREIRQLIASQESRTRIEAKRKVREVREEMLRQCFDEVSSYLKTIRTRPEYPSFLEAMITESAKNLGPSDIAVKVHPDDRRLAADSISRINQEGFSLILSEEPIITSGGVICERISDRVVIDNTVEVRFVRLEREMIVAASRILFHGER.

It belongs to the V-ATPase E subunit family. In terms of assembly, has multiple subunits with at least A(3), B(3), C, D, E, F, H, I and proteolipid K(x).

Its subcellular location is the cell membrane. Functionally, component of the A-type ATP synthase that produces ATP from ADP in the presence of a proton gradient across the membrane. The polypeptide is A-type ATP synthase subunit E 3 (Methanospirillum hungatei JF-1 (strain ATCC 27890 / DSM 864 / NBRC 100397 / JF-1)).